A 386-amino-acid chain; its full sequence is Methylthioribose-1-phosphate isomerase (386 aa).

The Proton donor role is filled by aspartate 258.

Belongs to the eIF-2B alpha/beta/delta subunits family. MtnA subfamily.

It localises to the cytoplasm. The protein localises to the nucleus. It carries out the reaction 5-(methylsulfanyl)-alpha-D-ribose 1-phosphate = 5-(methylsulfanyl)-D-ribulose 1-phosphate. It participates in amino-acid biosynthesis; L-methionine biosynthesis via salvage pathway; L-methionine from S-methyl-5-thio-alpha-D-ribose 1-phosphate: step 1/6. Its function is as follows. Catalyzes the interconversion of methylthioribose-1-phosphate (MTR-1-P) into methylthioribulose-1-phosphate (MTRu-1-P). The chain is Methylthioribose-1-phosphate isomerase from Uncinocarpus reesii (strain UAMH 1704).